A 539-amino-acid polypeptide reads, in one-letter code: MAFTAISLFLAALGVINTAFAQSAVIGPVTDLDIINAEVNLDGFPRQAVLAGGTFPGPLIKGNKGDNFRINVHDFLYNETMDVTTTIHWHGIFQRHTNWADGPAFVTQCPIAPGNSFLYNFTVPNQAGTFWYHSHEGLQYCDGLRGPFVVYDPEDPHRDLYDVDDESTVITLADWYHEAASLIVPPADPDSVLINGRGRQANDTTSPLAVINVEYGKRYRIRLISVSCDPYFNFTIDGHNFTIIEADGENTDPLPGVDQIQIFAAQRYSFILDANQPIDNYWIRVIPEQVGANGTAATPPGLAVLHYLGAPPFDPKANASQVPISVNPLLEQNLHALGATGVPDLDPSCAECNITLDFTFNTPLFFVNGVTYKSPTVPVLLQILNGSFTAQDLMPEGSVYTLPRNKTIQINMPGGVLGIPHPLHLHGHSFSVIRSANSDETNLYNPVRRDTVSIGTNGSFVAIRFTTDNPGPWFLHCHIDFHLAAGFAVVMAEDPMDVPGYVKPIPPAWDKLCPIYDALPANEQILQPEAANLSTYPQK.

Residues 1 to 21 form the signal peptide; sequence MAFTAISLFLAALGVINTAFA. Plastocyanin-like domains lie at 37-154 and 166-309; these read AEVN…YDPE and ESTV…HYLG. A glycan (N-linked (GlcNAc...) asparagine) is linked at Asn78. Positions 88 and 90 each coordinate Cu cation. 2 cysteine pairs are disulfide-bonded: Cys109/Cys513 and Cys141/Cys228. An N-linked (GlcNAc...) asparagine glycan is attached at Asn120. Cu cation-binding residues include His133 and His135. 8 N-linked (GlcNAc...) asparagine glycosylation sites follow: Asn202, Asn233, Asn240, Asn293, Asn318, Asn353, Asn385, and Asn405. The 122-residue stretch at 374–495 folds into the Plastocyanin-like 3 domain; the sequence is SPTVPVLLQI…GFAVVMAEDP (122 aa). Residues His421, His424, and His426 each contribute to the Cu cation site. Asn457 carries an N-linked (GlcNAc...) asparagine glycan. Residues His476, Cys477, His478, and His482 each coordinate Cu cation. N-linked (GlcNAc...) asparagine glycosylation occurs at Asn532.

It belongs to the multicopper oxidase family. Cu cation is required as a cofactor.

The protein resides in the secreted. The catalysed reaction is 4 hydroquinone + O2 = 4 benzosemiquinone + 2 H2O. With respect to regulation, inhibited by chloride ions. Inhibited by citrate. Inhibited by oxalate. Activated by acetate. Functionally, in vitro, has activity towards 2,2'-azino-bis(3-ethylbenzthiazoline-6-sulfonic acid) (ABTS), 2,6-dimethoxy-phenol, and guaiacol. Although brown rot fungi preferentially degrade hemicellulose and cellulose, the enzyme may contribute to generating small amounts of lignin breakdown products required for catalytic reactions. This is Laccase-1 from Fomitopsis schrenkii (Brown rot fungus).